Consider the following 542-residue polypeptide: Chaperonin GroEL 2 (542 aa).

Residues 30 to 33 (TLGP), Lys51, 87 to 91 (DGTTT), Gly415, and Asp496 contribute to the ATP site.

This sequence belongs to the chaperonin (HSP60) family. As to quaternary structure, forms a cylinder of 14 subunits composed of two heptameric rings stacked back-to-back. Interacts with the co-chaperonin GroES.

It is found in the cytoplasm. It catalyses the reaction ATP + H2O + a folded polypeptide = ADP + phosphate + an unfolded polypeptide.. Its function is as follows. Together with its co-chaperonin GroES, plays an essential role in assisting protein folding. The GroEL-GroES system forms a nano-cage that allows encapsulation of the non-native substrate proteins and provides a physical environment optimized to promote and accelerate protein folding. The protein is Chaperonin GroEL 2 of Azorhizobium caulinodans (strain ATCC 43989 / DSM 5975 / JCM 20966 / LMG 6465 / NBRC 14845 / NCIMB 13405 / ORS 571).